Reading from the N-terminus, the 305-residue chain is N-acetylmuramic acid 6-phosphate etherase (305 aa).

Residues 61–224 (ISDALAKGGR…STGAMVKLGK (164 aa)) enclose the SIS domain. The active-site Proton donor is Glu-89. The active site involves Glu-120.

This sequence belongs to the GCKR-like family. MurNAc-6-P etherase subfamily. In terms of assembly, homodimer.

It carries out the reaction N-acetyl-D-muramate 6-phosphate + H2O = N-acetyl-D-glucosamine 6-phosphate + (R)-lactate. It participates in amino-sugar metabolism; N-acetylmuramate degradation. Functionally, specifically catalyzes the cleavage of the D-lactyl ether substituent of MurNAc 6-phosphate, producing GlcNAc 6-phosphate and D-lactate. The protein is N-acetylmuramic acid 6-phosphate etherase of Synechocystis sp. (strain ATCC 27184 / PCC 6803 / Kazusa).